A 334-amino-acid polypeptide reads, in one-letter code: Cytoskeleton protein RodZ (334 aa).

Over 1-111 (MNTEATHDQN…LGKRRKKRDG (111 aa)) the chain is Cytoplasmic. In terms of domain architecture, HTH cro/C1-type spans 19–71 (LRNAREQLGLSQQAVAERLCLKVSTVRDIEEDKAPSDLASTFLRGYIRSYARL). Residues 30 to 49 (QQAVAERLCLKVSTVRDIEE) constitute a DNA-binding region (H-T-H motif). A helical; Signal-anchor for type II membrane protein membrane pass occupies residues 112–132 (WLMSFTWLVLFVVVGLTGAWW). The Periplasmic portion of the chain corresponds to 133–334 (WQNHKAQQEE…TLNAEPTPAQ (202 aa)). Disordered stretches follow at residues 155 to 207 (NADK…ATQN) and 221 to 241 (ATSA…SQAG). The segment covering 176-207 (TTPAQTAPAPATPVDSTAATQTPAATATATQN) has biased composition (low complexity).

The protein belongs to the RodZ family.

It localises to the cell inner membrane. In terms of biological role, cytoskeletal protein that is involved in cell-shape control through regulation of the length of the long axis. This chain is Cytoskeleton protein RodZ, found in Salmonella schwarzengrund (strain CVM19633).